We begin with the raw amino-acid sequence, 307 residues long: Lactamase-like protein vrtG (307 aa).

Zn(2+)-binding residues include His97, His99, Asp101, and His102. The Proton donor/acceptor role is filled by Asp101.

It belongs to the metallo-beta-lactamase superfamily. The cofactor is Zn(2+).

It functions in the pathway secondary metabolite biosynthesis; terpenoid biosynthesis. Its function is as follows. Lactamase-like protein; part of the gene cluster that mediates the biosynthesis of viridicatumtoxin, a tetracycline-like fungal meroterpenoid with a unique, fused spirobicyclic ring system. The first step of the pathway is the production of the malonamoyl-CoA starter unit for the polyketide synthase vrtA. The aldolase vrtJ may be involved in the synthesis of the malonamate substrate for malonamoyl-CoA synthetase vrtB. The polyketide synthase vrtA then may utilize the malonamoyl-CoA starter unit, followed by sequential condensation of eight malonyl-CoA units to form the polyketide backbone. The cyclization of the last ring could be mediated by the lactamase-like protein vrtG. The proposed post-PKS tailoring steps are a hydroxylation at C5 catalyzed the cytochrome P450 monooxygenase vrtE, a hydroxylation at C12a catalyzed by VrtH and/or VrtI, and an O-methylation by the O-methyltransferase vrtF. VrtC is then proposed to catalyze the transfer of a geranyl group synthesized by vrtD to the aromatic C ring of the tetracyclic polyketide intermediate of viridicatumtoxin to yield previridicatumtoxin. Finally, the cytochrome P450 monooxygenase vrtK catalyzes the spirocyclization of the geranyl moiety of previridicatumtoxin to afford viridicatumtoxin. This Penicillium aethiopicum protein is Lactamase-like protein vrtG.